The following is a 234-amino-acid chain: Glucosamine-6-phosphate deaminase (234 aa).

D63 serves as the catalytic Proton acceptor; for enolization step. The active-site For ring-opening step is the N129. The active-site Proton acceptor; for ring-opening step is H131. Catalysis depends on E136, which acts as the For ring-opening step.

It belongs to the glucosamine/galactosamine-6-phosphate isomerase family. NagB subfamily.

The enzyme catalyses alpha-D-glucosamine 6-phosphate + H2O = beta-D-fructose 6-phosphate + NH4(+). It participates in amino-sugar metabolism; N-acetylneuraminate degradation; D-fructose 6-phosphate from N-acetylneuraminate: step 5/5. Catalyzes the reversible isomerization-deamination of glucosamine 6-phosphate (GlcN6P) to form fructose 6-phosphate (Fru6P) and ammonium ion. This is Glucosamine-6-phosphate deaminase from Listeria innocua serovar 6a (strain ATCC BAA-680 / CLIP 11262).